The chain runs to 138 residues: Large ribosomal subunit protein uL16 (138 aa).

The span at 1–16 (MLIPKRVKYRRQHRPT) shows a compositional bias: basic residues. The interval 1–23 (MLIPKRVKYRRQHRPTRSGVSKG) is disordered.

Belongs to the universal ribosomal protein uL16 family. As to quaternary structure, part of the 50S ribosomal subunit.

Binds 23S rRNA and is also seen to make contacts with the A and possibly P site tRNAs. The chain is Large ribosomal subunit protein uL16 from Corynebacterium aurimucosum (strain ATCC 700975 / DSM 44827 / CIP 107346 / CN-1) (Corynebacterium nigricans).